Reading from the N-terminus, the 134-residue chain is Cytochrome b5 (134 aa).

Residue Ala-2 is modified to N-acetylalanine. N6-acetyllysine occurs at positions 7, 10, and 19. One can recognise a Cytochrome b5 heme-binding domain in the interval 9-85 (VKYYTLEEIQ…SKTFIIGELH (77 aa)). 2 residues coordinate heme: His-44 and His-68. Residues 109 to 131 (WWTNWVIPAISALVVSLMYHFYT) traverse the membrane as a helical segment.

The protein belongs to the cytochrome b5 family.

It localises to the endoplasmic reticulum membrane. It is found in the microsome membrane. Its subcellular location is the cytoplasm. Functionally, cytochrome b5 is a membrane-bound hemoprotein functioning as an electron carrier for several membrane-bound oxygenases. In Sus scrofa (Pig), this protein is Cytochrome b5 (CYB5A).